A 408-amino-acid polypeptide reads, in one-letter code: Subtilisin-like protease 6 (408 aa).

Positions 1–20 are cleaved as a signal peptide; it reads MGFITKAIPIVLAALSTVDG. Positions 21 to 123 are excised as a propeptide; that stretch reads AKILEAGPHA…RDTVVKATAI (103 aa). Residues 36-119 enclose the Inhibitor I9 domain; that stretch reads KYIVVMKQDV…DFIERDTVVK (84 aa). Residues 131–408 enclose the Peptidase S8 domain; it reads SWGLARVGSK…GKLIYNGSGK (278 aa). Active-site charge relay system residues include Asp-163 and His-194. 3 N-linked (GlcNAc...) asparagine glycosylation sites follow: Asn-248, Asn-260, and Asn-345. The Charge relay system role is filled by Ser-354. Residue Asn-404 is glycosylated (N-linked (GlcNAc...) asparagine).

Belongs to the peptidase S8 family.

The protein resides in the secreted. Its function is as follows. Secreted subtilisin-like serine protease with keratinolytic activity that contributes to pathogenicity. This is Subtilisin-like protease 6 (SUB6) from Arthroderma gypseum (strain ATCC MYA-4604 / CBS 118893) (Microsporum gypseum).